A 207-amino-acid polypeptide reads, in one-letter code: Small ribosomal subunit protein uS4 (207 aa).

The interval 31–53 is disordered; that stretch reads KAKFDSKPGQHGRTSGARTSDFG. The 61-residue stretch at 97–157 folds into the S4 RNA-binding domain; sequence SRLDNVVYRM…EKSKKQARIV (61 aa).

The protein belongs to the universal ribosomal protein uS4 family. As to quaternary structure, part of the 30S ribosomal subunit. Contacts protein S5. The interaction surface between S4 and S5 is involved in control of translational fidelity.

Functionally, one of the primary rRNA binding proteins, it binds directly to 16S rRNA where it nucleates assembly of the body of the 30S subunit. With S5 and S12 plays an important role in translational accuracy. The chain is Small ribosomal subunit protein uS4 from Paracidovorax citrulli (strain AAC00-1) (Acidovorax citrulli).